Reading from the N-terminus, the 328-residue chain is Porphobilinogen deaminase (328 aa).

Position 245 is an S-(dipyrrolylmethanemethyl)cysteine (Cys245).

This sequence belongs to the HMBS family. In terms of assembly, monomer. It depends on dipyrromethane as a cofactor.

It catalyses the reaction 4 porphobilinogen + H2O = hydroxymethylbilane + 4 NH4(+). It functions in the pathway porphyrin-containing compound metabolism; protoporphyrin-IX biosynthesis; coproporphyrinogen-III from 5-aminolevulinate: step 2/4. The protein operates within porphyrin-containing compound metabolism; chlorophyll biosynthesis. Its function is as follows. Tetrapolymerization of the monopyrrole PBG into the hydroxymethylbilane pre-uroporphyrinogen in several discrete steps. In Gloeobacter violaceus (strain ATCC 29082 / PCC 7421), this protein is Porphobilinogen deaminase.